The sequence spans 358 residues: Aromatic amino acid aminotransferase (358 aa).

K219 bears the N6-(pyridoxal phosphate)lysine mark.

Belongs to the class-II pyridoxal-phosphate-dependent aminotransferase family. In terms of assembly, homodimer. Requires pyridoxal 5'-phosphate as cofactor.

It carries out the reaction an aromatic L-alpha-amino acid + 2-oxoglutarate = an aromatic oxo-acid + L-glutamate. Its function is as follows. Aminotransferase that catalyzes the conversion of aromatic amino acids and 2-oxoglutarate into corresponding aromatic oxo acids and L-glutamate. This chain is Aromatic amino acid aminotransferase, found in Nocardia farcinica (strain IFM 10152).